We begin with the raw amino-acid sequence, 315 residues long: Methionyl-tRNA formyltransferase (315 aa).

Ser113–Pro116 lines the (6S)-5,6,7,8-tetrahydrofolate pocket.

Belongs to the Fmt family.

The enzyme catalyses L-methionyl-tRNA(fMet) + (6R)-10-formyltetrahydrofolate = N-formyl-L-methionyl-tRNA(fMet) + (6S)-5,6,7,8-tetrahydrofolate + H(+). Its function is as follows. Attaches a formyl group to the free amino group of methionyl-tRNA(fMet). The formyl group appears to play a dual role in the initiator identity of N-formylmethionyl-tRNA by promoting its recognition by IF2 and preventing the misappropriation of this tRNA by the elongation apparatus. The chain is Methionyl-tRNA formyltransferase from Yersinia enterocolitica serotype O:8 / biotype 1B (strain NCTC 13174 / 8081).